Consider the following 332-residue polypeptide: Melanocortin receptor 4 (332 aa).

The Extracellular portion of the chain corresponds to 1–43; it reads MNSTHHHGMHTSLHFWNRSTYGLHSNASEPLGKGYSEGGCYEQ. Asn2, Asn17, and Asn26 each carry an N-linked (GlcNAc...) asparagine glycan. 2 cysteine pairs are disulfide-bonded: Cys40-Cys279 and Cys271-Cys277. Residues 44 to 69 form a helical membrane-spanning segment; that stretch reads LFVSPEVFVTLGVISLLENILVIVAI. The Cytoplasmic portion of the chain corresponds to 70–81; that stretch reads AKNKNLHSPMYF. The helical transmembrane segment at 82-106 threads the bilayer; it reads FICSLAVADMLVSVSNGSETIVITL. Residues Glu100, Asp122, and Asp126 each coordinate Ca(2+). Over 107–123 the chain is Extracellular; sequence LNSTDTDAQSFTVNIDN. The helical transmembrane segment at 124 to 145 threads the bilayer; that stretch reads VIDSVICSSLLASICSLLSIAV. The Cytoplasmic segment spans residues 146-165; sequence DRYFTIFYALQYHNIMTVKR. A helical membrane pass occupies residues 166 to 186; it reads VGIIISCIWAVCTVSGVLFII. Over 187-191 the chain is Extracellular; that stretch reads YSDSS. The helical transmembrane segment at 192 to 215 threads the bilayer; that stretch reads AVIICLITVFFTMLALMASLYVHM. At 216–248 the chain is on the cytoplasmic side; it reads FLMARLHIKRIAVLPGTGTIRQGANMKGAITLT. The helical transmembrane segment at 249–271 threads the bilayer; sequence ILIGVFVVCWAPFFLHLIFYISC. The Extracellular portion of the chain corresponds to 272–280; it reads PQNPYCVCF. Residues 281–304 traverse the membrane as a helical segment; the sequence is MSHFNLYLILIMCNSIIDPLIYAL. Residues 305–332 are Cytoplasmic-facing; sequence RSQELRKTFKEIICCYPLGGLCDLSSRY. Cys318 is lipidated: S-palmitoyl cysteine.

The protein belongs to the G-protein coupled receptor 1 family. As to quaternary structure, homodimer; disulfide-linked, also forms higher order oligomers. Interacts with GNAS. Interacts with ATRNL1. Interacts with MGRN1; this interaction competes with GNAS-binding and thus inhibits agonist-induced cAMP production. Interacts with MRAP and MRAP2; these associated factors increase ligand-sensitivity and generation of cAMP.

The protein localises to the cell membrane. Its function is as follows. Hormone receptor that acts as a key component of the leptin-melanocortin pathway at the intersection of homeostatic maintenance of energetic state. Plays a role in regulating food intake: activation by a stimulating hormone such as anorexigenic alpha-melanocyte stimulating hormone (alpha-MSH) inhibits appetite, whereas binding to a natural antagonist like Agouti-related protein/AGRP promotes appetite. G-protein-coupled receptor that activates conventional Galphas signaling leading to induction of anorexogenic signaling in the hypothalamus to result in negative energy balance. Regulates the firing activity of neurons from the hypothalamus by alpha-MSH and AGRP independently of Galphas signaling by ligand-induced coupling of closure of inwardly rectifying potassium channel KCNJ13. In intestinal epithelial cells, plays a role in the inhibition of hepatic glucose production via nesfatin-1/NUCB2 leading to increased cyclic adenosine monophosphate (cAMP) levels and glucagon-like peptide 1 (GLP-1) secretion in the intestinal epithelium. The protein is Melanocortin receptor 4 (MC4R) of Sus scrofa (Pig).